The following is a 747-amino-acid chain: Photosystem I P700 chlorophyll a apoprotein A2 (747 aa).

Transmembrane regions (helical) follow at residues Leu46–Ala69, Leu135–Gln158, Leu175–Ile199, Ile273–Tyr291, Leu341–Gly364, Ser380–Val406, Ala428–His450, and Phe530–Ile548. Cys572 and Cys581 together coordinate [4Fe-4S] cluster. 2 helical membrane passes run Ala588–Trp609 and Leu656–Ile678. The divinyl chlorophyll a site is built by His667, Met675, and Tyr683. Residue Trp684 coordinates phylloquinone. Residues Leu720–Ala740 traverse the membrane as a helical segment.

It belongs to the PsaA/PsaB family. The PsaA/B heterodimer binds the P700 divinyl chlorophyll special pair and subsequent electron acceptors. PSI consists of a core antenna complex that captures photons, and an electron transfer chain that converts photonic excitation into a charge separation. The cyanobacterial PSI reaction center is composed of one copy each of PsaA,B,C,D,E,F,I,J,K,L,M and X, and forms trimeric complexes. PSI electron transfer chain: 5 divinyl chlorophyll a, 1 divinyl chlorophyll a', 2 phylloquinones and 3 4Fe-4S clusters. PSI core antenna: 90 divinyl chlorophyll a, 22 carotenoids, 3 phospholipids and 1 galactolipid. P700 is a divinyl chlorophyll a/divinyl chlorophyll a' dimer, A0 is one or more divinyl chlorophyll a, A1 is one or both phylloquinones and FX is a shared 4Fe-4S iron-sulfur center. is required as a cofactor.

Its subcellular location is the cellular thylakoid membrane. It carries out the reaction reduced [plastocyanin] + hnu + oxidized [2Fe-2S]-[ferredoxin] = oxidized [plastocyanin] + reduced [2Fe-2S]-[ferredoxin]. Functionally, psaA and PsaB bind P700, the primary electron donor of photosystem I (PSI), as well as the electron acceptors A0, A1 and FX. PSI is a plastocyanin/cytochrome c6-ferredoxin oxidoreductase, converting photonic excitation into a charge separation, which transfers an electron from the donor P700 chlorophyll pair to the spectroscopically characterized acceptors A0, A1, FX, FA and FB in turn. Oxidized P700 is reduced on the lumenal side of the thylakoid membrane by plastocyanin or cytochrome c6. This chain is Photosystem I P700 chlorophyll a apoprotein A2, found in Prochlorococcus marinus (strain SARG / CCMP1375 / SS120).